The chain runs to 286 residues: Small ribosomal subunit protein uS2 (286 aa).

A disordered region spans residues 257-286 (KDNKSNKSNTINADENIKESDLIGGSNNEG).

It belongs to the universal ribosomal protein uS2 family.

This chain is Small ribosomal subunit protein uS2, found in Ehrlichia ruminantium (strain Gardel).